The following is a 152-amino-acid chain: MNLNDIALTGLIVLMLAFAVYDEFVVNFLKGKTHLQIKLKRKHKIDALIFIILILIVVYNNITVYGSRLTTYLLLFTILVTIYIAYIRSPKLFFKNNGFFYANTFISYSRIKTMNLSEDGILVIGLENKKLYISVSQIDDLERIYKFLIENR.

3 consecutive transmembrane segments (helical) span residues 6 to 26, 45 to 65, and 67 to 87; these read IALT…EFVV, IDAL…ITVY, and SRLT…IAYI.

The protein belongs to the UPF0266 family.

It localises to the cell inner membrane. The chain is UPF0266 membrane protein plu2700 from Photorhabdus laumondii subsp. laumondii (strain DSM 15139 / CIP 105565 / TT01) (Photorhabdus luminescens subsp. laumondii).